We begin with the raw amino-acid sequence, 219 residues long: 2-hydroxy-3-keto-5-methylthiopentenyl-1-phosphate phosphatase (219 aa).

The protein belongs to the HAD-like hydrolase superfamily. MtnX family.

It catalyses the reaction 2-hydroxy-5-methylsulfanyl-3-oxopent-1-enyl phosphate + H2O = 1,2-dihydroxy-5-(methylsulfanyl)pent-1-en-3-one + phosphate. The protein operates within amino-acid biosynthesis; L-methionine biosynthesis via salvage pathway; L-methionine from S-methyl-5-thio-alpha-D-ribose 1-phosphate: step 4/6. Functionally, dephosphorylates 2-hydroxy-3-keto-5-methylthiopentenyl-1-phosphate (HK-MTPenyl-1-P) yielding 1,2-dihydroxy-3-keto-5-methylthiopentene (DHK-MTPene). This Bacillus cereus (strain G9842) protein is 2-hydroxy-3-keto-5-methylthiopentenyl-1-phosphate phosphatase.